The following is a 334-amino-acid chain: Trans-3-hydroxy-L-proline dehydratase (334 aa).

Cys-91 acts as the Proton acceptor in catalysis. Substrate contacts are provided by residues 92–93 (GH), Asp-250, and 255–256 (GT).

The protein belongs to the proline racemase family.

The catalysed reaction is trans-3-hydroxy-L-proline = 1-pyrroline-2-carboxylate + H2O. Functionally, catalyzes the dehydration of trans-3-hydroxy-L-proline (t3LHyp) to Delta(1)-pyrroline-2-carboxylate (Pyr2C). Is likely involved in a degradation pathway that converts t3LHyp to L-proline. Can also catalyze the epimerization of trans-4-hydroxy-L-proline (t4LHyp) to cis-4-hydroxy-D-proline (c4DHyp) in vitro. Displays no proline racemase activity. This chain is Trans-3-hydroxy-L-proline dehydratase, found in Bacillus thuringiensis subsp. konkukian (strain 97-27).